The chain runs to 533 residues: Calcium-dependent protein kinase 12 (533 aa).

Residues 1 to 77 form a disordered region; it reads MGNCFTKTYE…RASGGGGEMG (77 aa). Gly-2 carries the N-myristoyl glycine lipid modification. Residues 26–38 are compositionally biased toward basic and acidic residues; the sequence is ERSKARGGDEPGT. The segment covering 57 to 69 has biased composition (low complexity); the sequence is GSSSAAGALSRRA. One can recognise a Protein kinase domain in the interval 91-349; that stretch reads YQLDRKLGSG…ASQALEHRWL (259 aa). Residues 97–105 and Lys-120 each bind ATP; that span reads LGSGQFGTT. The Proton acceptor role is filled by Asp-215. Residues 354 to 384 are autoinhibitory domain; it reads ASDRPIDSAVLSRMKQFKAMNKLKQLALKVI. EF-hand domains are found at residues 391–426, 427–462, 463–498, and 499–533; these read EEIKGLKQMFNNMDTDRSGTITVEELKVGLTKLGSR, ISEAEVQKLMEAVDVDKSGSIDYSEFLTAMINKHKL, EKEEDLLRAFQHFDKDNSGYITRDELEQAMAEYGMG, and DEANIKQVLDEVDKDKDGRIDYEEFVEMMRKGIQT. Ca(2+)-binding residues include Asp-404, Asp-406, Ser-408, Thr-410, Glu-415, Asp-440, Asp-442, Ser-444, Ser-446, Glu-451, Asp-476, Asp-478, Ser-480, Tyr-482, Glu-487, Asp-511, Asp-513, Asp-515, Arg-517, and Glu-522.

The protein belongs to the protein kinase superfamily. Ser/Thr protein kinase family. CDPK subfamily. Expressed in roots, leaf blades and developing seeds. Expressed in vascular tissues of roots and leaf blades. Expressed in the phloem tissue of the large vascular bundle in leaf blades.

It is found in the membrane. The catalysed reaction is L-seryl-[protein] + ATP = O-phospho-L-seryl-[protein] + ADP + H(+). It catalyses the reaction L-threonyl-[protein] + ATP = O-phospho-L-threonyl-[protein] + ADP + H(+). Activated by calcium. Autophosphorylation may play an important role in the regulation of the kinase activity. Functionally, may play a role in signal transduction pathways that involve calcium as a second messenger. Functions in signal transduction pathways that positively regulate responses to low-nitrogen. Functions in multiple signaling pathways, positively regulating salt tolerance and negatively modulating rice blast fungus resistance. May promote tolerance to salt stress by negatively regulating NADPH oxidase and positively regulating reactive oxygen species (ROS) scavengers. In Oryza sativa subsp. japonica (Rice), this protein is Calcium-dependent protein kinase 12.